Consider the following 313-residue polypeptide: Ribosomal RNA small subunit methyltransferase H (313 aa).

Residues 35–37 (GGH), D55, F79, D101, and Q108 contribute to the S-adenosyl-L-methionine site.

The protein belongs to the methyltransferase superfamily. RsmH family.

Its subcellular location is the cytoplasm. It carries out the reaction cytidine(1402) in 16S rRNA + S-adenosyl-L-methionine = N(4)-methylcytidine(1402) in 16S rRNA + S-adenosyl-L-homocysteine + H(+). Functionally, specifically methylates the N4 position of cytidine in position 1402 (C1402) of 16S rRNA. This chain is Ribosomal RNA small subunit methyltransferase H, found in Salmonella agona (strain SL483).